A 337-amino-acid chain; its full sequence is MTEPKDIVLKESEEVEGIPIEGPWLDDVSSLEEVLDYYERIGFQATHLGKAIEIWKKVEKRRAEGKEVRVFLGYTSNIISSGLRELVAWLVKEGKIDVIVTTAGGIEEDFIKALKPFILGDWHVNDALMREKGINRIGNIFVPNDRYIEFEKYMIPFFERVLEIEKERGKPLTASEFIYELGRYMDEKLGKEKERSVIYWAYKRNVPIFCPAITDGSIGDMLYFFKEERGDRELIIDIANDIVKLNNLAVTAKETASIILGGSLPKHAIINANLFRGGTDYAIYITTAVPWDGSLSGAPPSEGVSWGKIRAKADYVEIWADATLVFPLLVWKVMKAP.

Lys-308 (nucleophile) is an active-site residue.

Belongs to the deoxyhypusine synthase family. NAD(+) serves as cofactor.

The enzyme catalyses [eIF5A protein]-L-lysine + spermidine = [eIF5A protein]-deoxyhypusine + propane-1,3-diamine. The protein operates within protein modification; eIF5A hypusination. Its function is as follows. Catalyzes the NAD-dependent oxidative cleavage of spermidine and the subsequent transfer of the butylamine moiety of spermidine to the epsilon-amino group of a specific lysine residue of the eIF-5A precursor protein to form the intermediate deoxyhypusine residue. This chain is Probable deoxyhypusine synthase, found in Thermococcus kodakarensis (strain ATCC BAA-918 / JCM 12380 / KOD1) (Pyrococcus kodakaraensis (strain KOD1)).